We begin with the raw amino-acid sequence, 985 residues long: Bifunctional glutamine synthetase adenylyltransferase/adenylyl-removing enzyme (985 aa).

Positions 1–460 (MSLPSLADFP…HFRQVIADPD (460 aa)) are adenylyl removase. Residues 476-985 (GGEWLPLWEE…MRIWAQMGLS (510 aa)) form an adenylyl transferase region.

It belongs to the GlnE family. Requires Mg(2+) as cofactor.

The catalysed reaction is [glutamine synthetase]-O(4)-(5'-adenylyl)-L-tyrosine + phosphate = [glutamine synthetase]-L-tyrosine + ADP. The enzyme catalyses [glutamine synthetase]-L-tyrosine + ATP = [glutamine synthetase]-O(4)-(5'-adenylyl)-L-tyrosine + diphosphate. Functionally, involved in the regulation of glutamine synthetase GlnA, a key enzyme in the process to assimilate ammonia. When cellular nitrogen levels are high, the C-terminal adenylyl transferase (AT) inactivates GlnA by covalent transfer of an adenylyl group from ATP to specific tyrosine residue of GlnA, thus reducing its activity. Conversely, when nitrogen levels are low, the N-terminal adenylyl removase (AR) activates GlnA by removing the adenylyl group by phosphorolysis, increasing its activity. The regulatory region of GlnE binds the signal transduction protein PII (GlnB) which indicates the nitrogen status of the cell. The protein is Bifunctional glutamine synthetase adenylyltransferase/adenylyl-removing enzyme of Pseudomonas syringae pv. tomato (strain ATCC BAA-871 / DC3000).